The chain runs to 194 residues: dTTP/UTP pyrophosphatase (194 aa).

The Proton acceptor role is filled by D76.

Belongs to the Maf family. YhdE subfamily. It depends on a divalent metal cation as a cofactor.

It is found in the cytoplasm. It carries out the reaction dTTP + H2O = dTMP + diphosphate + H(+). It catalyses the reaction UTP + H2O = UMP + diphosphate + H(+). In terms of biological role, nucleoside triphosphate pyrophosphatase that hydrolyzes dTTP and UTP. May have a dual role in cell division arrest and in preventing the incorporation of modified nucleotides into cellular nucleic acids. This is dTTP/UTP pyrophosphatase from Shewanella oneidensis (strain ATCC 700550 / JCM 31522 / CIP 106686 / LMG 19005 / NCIMB 14063 / MR-1).